The sequence spans 65 residues: GVRDAYIADDKNCVYTCASNGYCNTECTKNGAESGYCQWIGRYGNACWCIKLPDEVPIRIPGKCR.

Residues 3 to 65 (RDAYIADDKN…VPIRIPGKCR (63 aa)) form the LCN-type CS-alpha/beta domain. The Important for toxin selectivity for individual Nav channel subtype (Nav1.6/SCN8A and Nav1.7/SCN9A), but not for toxin potency signature appears at 9–11 (DDK). 4 disulfide bridges follow: C13–C64, C17–C37, C23–C47, and C27–C49. R65 is subject to Arginine amide.

Belongs to the long (4 C-C) scorpion toxin superfamily. Sodium channel inhibitor family. Alpha subfamily. Expressed by the venom gland.

Its subcellular location is the secreted. Its function is as follows. Alpha toxins bind voltage-independently at site-3 of sodium channels and inhibit the inactivation of the activated channels. The toxin affect mammalian sodium channels Nav1.7/SCN9A (EC(50)=4.5 nM), Nav1.4/SCN4A (EC(50)=9.6 nM), Nav1.6/SCN8A (EC(50)=30 nM), Nav1.5/SCN5A (only at micromolar concentrations), and insect sodium channel para/tipE (EC(50)=80 nM). In vivo, intraplantar administration of this toxin elicits pain behaviors, including licking and flinching of the hind paw. The sequence is that of Alpha-toxin OD1 from Odontobuthus doriae (Yellow Iranian scorpion).